Consider the following 172-residue polypeptide: Protein LOL2 (172 aa).

3 putative zinc finger regions span residues 4 to 34 (QIVC…VSST), 44 to 74 (HLIC…VNLV), and 82 to 112 (HLNC…ITNT).

Its subcellular location is the nucleus. Functionally, putative zinc finger that may be involved in programmed cell death and defense response. The protein is Protein LOL2 (LOL2) of Oryza sativa subsp. japonica (Rice).